Consider the following 487-residue polypeptide: MAWQVSLPELEDRLQCPICLEVFKEPLMLQCGHSYCKGCLVSLSCHLDAELRCPVCRQAVDGSSSLPNVSLARVIEALRLPGDPEPKVCVHHRNPLSLFCEKDQELICGLCGLLGSHQHHPVTPVSTVYSRMKEELAALISELKQEQKKVDELIAKLVNNRTRIVNESDVFSWVIRREFQELHHLVDEEKARCLEGIGGHTRGLVASLDMQLEQAQGTRERLAQAECVLEQFGNEDHHKFIRKFHSMASRAEMPQARPLEGAFSPISFKPGLHQADIKLTVWKRLFRKVLPAPEPLKLDPATAHPLLELSKGNTVVQCGLLAQRRASQPERFDYSTCVLASRGFSCGRHYWEVVVGSKSDWRLGVIKGTASRKGKLNRSPEHGVWLIGLKEGRVYEAFACPRVPLPVAGHPHRIGLYLHYEQGELTFFDADRPDDLRPLYTFQADFQGKLYPILDTCWHERGSNSLPMVLPPPSGPGPLSPEQPTKL.

Residues 16–57 (CPICLEVFKEPLMLQCGHSYCKGCLVSLSCHLDAELRCPVCR) form an RING-type zinc finger. The segment at 84-125 (PEPKVCVHHRNPLSLFCEKDQELICGLCGLLGSHQHHPVTPV) adopts a B box-type zinc-finger fold. Zn(2+)-binding residues include Cys89, His92, Cys111, and His117. Coiled coils occupy residues 125-169 (VSTV…NESD) and 204-235 (LVAS…FGNE). Residues 276–475 (DIKLTVWKRL…LPMVLPPPSG (200 aa)) form the B30.2/SPRY domain. Lys373 bears the N6-acetyllysine mark. Residues 468–487 (MVLPPPSGPGPLSPEQPTKL) are disordered. Positions 469 to 481 (VLPPPSGPGPLSP) are enriched in pro residues.

This sequence belongs to the TRIM/RBCC family. Can form dimers and trimers. Interacts with several E2 ubiquitin-conjugating enzymes, including UBE2L6, UBE2E1, UBE2E3. No interaction with UBE2H. Interacts with BECN1. Interacts with SQSTM1. Interacts with NLRP3. Post-translationally, auto-ubiquitinated. Acetylated by EP300 and KAT2B. HDAC6 drives TRIM50 deacetylation. Acetylation antagonizes with TRIM50 ubiquitination.

Its subcellular location is the cytoplasm. It carries out the reaction S-ubiquitinyl-[E2 ubiquitin-conjugating enzyme]-L-cysteine + [acceptor protein]-L-lysine = [E2 ubiquitin-conjugating enzyme]-L-cysteine + N(6)-ubiquitinyl-[acceptor protein]-L-lysine.. E3 ubiquitin-protein ligase that ubiquitinates Beclin-1/BECN1 in a 'Lys-63'-dependent manner enhancing its binding to ULK1. In turn, promotes starvation-induced autophagy activation. Also interacts with p62/SQSTM1 protein and thereby induces the formation and the autophagy clearance of aggresome-associated polyubiquitinated proteins through HDAC6 interaction. Also promotes NLRP3 inflammasome activation by directly inducing NLRP3 oligomerization independent of its E3 ligase function. The chain is E3 ubiquitin-protein ligase TRIM50 from Homo sapiens (Human).